A 257-amino-acid polypeptide reads, in one-letter code: Glutamate racemase (257 aa).

Residues 12 to 13 and 44 to 45 each bind substrate; these read DS and YG. C75 (proton donor/acceptor) is an active-site residue. Position 76–77 (76–77) interacts with substrate; sequence NT. C185 acts as the Proton donor/acceptor in catalysis. Substrate is bound at residue 186–187; that stretch reads TH.

Belongs to the aspartate/glutamate racemases family.

It carries out the reaction L-glutamate = D-glutamate. Its pathway is cell wall biogenesis; peptidoglycan biosynthesis. Provides the (R)-glutamate required for cell wall biosynthesis. This is Glutamate racemase from Clostridium botulinum (strain Langeland / NCTC 10281 / Type F).